Here is a 251-residue protein sequence, read N- to C-terminus: Small ribosomal subunit protein uS2 (251 aa).

Serine 2 carries the N-acetylserine modification. A disordered region spans residues 213-251; the sequence is QVAEEATAAADEDVKEEVAEEQTEAADWAEGNTEEVASW. Over residues 222 to 236 the composition is skewed to acidic residues; that stretch reads ADEDVKEEVAEEQTE.

The protein belongs to the universal ribosomal protein uS2 family. As to quaternary structure, component of the small ribosomal subunit. Mature ribosomes consist of a small (40S) and a large (60S) subunit. The 40S subunit contains about 33 different proteins and 1 molecule of RNA (18S). The 60S subunit contains about 49 different proteins and 3 molecules of RNA (25S, 5.8S and 5S). Interacts with RPS21.

It localises to the cytoplasm. Required for the assembly and/or stability of the 40S ribosomal subunit. Required for the processing of the 20S rRNA-precursor to mature 18S rRNA in a late step of the maturation of 40S ribosomal subunits. The polypeptide is Small ribosomal subunit protein uS2 (Lachancea thermotolerans (strain ATCC 56472 / CBS 6340 / NRRL Y-8284) (Yeast)).